The primary structure comprises 278 residues: Envelope glycoprotein L (278 aa).

A signal peptide spans 1–30 (MCRRPDCGFSFSPGPVVLLWCCLLLPIVSS). Residues 43–256 (VPAECPELTR…DKYYAGLPPE (214 aa)) form the gL betaherpesvirus-type domain. Cys-154 and Cys-159 are disulfide-bonded.

It belongs to the herpesviridae glycoprotein L (gL) family. Betaherpesvirinae gL subfamily. Interacts with glycoprotein H (gH); this interaction is necessary for the correct processing and cell surface expression of gH. Forms the envelope pentamer complex (PC) composed of gH, gL, UL128, UL130, and UL131A. The pentamer interacts with host NRP2. Forms the envelope trimer complex composed of gH, gL, and gO. The trimer interacts with host PDGFRA.

The protein resides in the virion membrane. Its subcellular location is the host cell membrane. It localises to the host Golgi apparatus. It is found in the host trans-Golgi network. Its function is as follows. The heterodimer glycoprotein H-glycoprotein L is required for the fusion of viral and plasma membranes leading to virus entry into the host cell. Acts as a functional inhibitor of gH and maintains gH in an inhibited form. Upon binding to host integrins, gL dissociates from gH leading to activation of the viral fusion glycoproteins gB and gH. In human cytomegalovirus, forms two distincts complexes to mediate viral entry, a trimer and a pentamer at the surface of the virion envelope. The gH-gL-gO trimer is required for infection in fibroblasts by interacting with host PDGFRA. The gH-gL-UL128-UL130-UL131A pentamer is essential for viral entry in epithelial, endothelial and myeloid cells via interaction with host NRP2. This Human cytomegalovirus (strain AD169) (HHV-5) protein is Envelope glycoprotein L.